The following is a 299-amino-acid chain: Ig alpha chain C region (299 aa).

Ig-like domains follow at residues 71 to 167 and 174 to 276; these read PSLS…ATIS and PQVH…KTID.

Its function is as follows. Ig alpha is the major immunoglobulin class in body secretions. It may serve both to defend against local infection and to prevent access of foreign antigens to the general immunologic system. The sequence is that of Ig alpha chain C region from Oryctolagus cuniculus (Rabbit).